Consider the following 130-residue polypeptide: Large-conductance mechanosensitive channel (130 aa).

2 consecutive transmembrane segments (helical) span residues 11 to 31 (FALKGNVLDLAVAVVIGAAFG) and 70 to 90 (GAFIQSIVDFIIIAFAIFIFV).

The protein belongs to the MscL family. Homopentamer.

The protein localises to the cell membrane. Functionally, channel that opens in response to stretch forces in the membrane lipid bilayer. May participate in the regulation of osmotic pressure changes within the cell. This chain is Large-conductance mechanosensitive channel, found in Listeria welshimeri serovar 6b (strain ATCC 35897 / DSM 20650 / CCUG 15529 / CIP 8149 / NCTC 11857 / SLCC 5334 / V8).